Consider the following 342-residue polypeptide: Hydrogenase expression/formation protein HupV (342 aa).

It belongs to the HupK family.

This chain is Hydrogenase expression/formation protein HupV (hupV), found in Azotobacter chroococcum mcd 1.